A 30-amino-acid chain; its full sequence is Acidic phospholipase A2 homolog cannitoxin gamma chain (30 aa).

In terms of assembly, heterotrimer of alpha, beta, and gamma chains; non-covalently linked. In terms of processing, glycosylated. As to expression, expressed by the venom gland.

It localises to the secreted. Its function is as follows. Heterotrimer: Snake venom phospholipase A2 (PLA2) heterotrimer that acts as a potent presynaptic neurotoxin by blocking synaptic transmission and synaptic vesicle recycling. Enzymatic activity is essential for the neurotoxic effects. May act by binding in a calcium-dependent fashion to neurotonal pentraxin-1 (NPTX1) and neurotonal pentraxin-2 (NPTX2), but not to neuronal pentraxin receptor (NPTXR). Also binds to taipoxin-associated calcium binding protein 49 (RCN2), a protein localized in the lumen of endoplasmic reticulum. Monomer (gamma chain): Snake venom phospholipase A2 homolog that is neither toxic nor enzymatically active. Does not bind calcium. The protein is Acidic phospholipase A2 homolog cannitoxin gamma chain of Oxyuranus scutellatus canni (Papuan taipan).